The following is a 334-amino-acid chain: MVGREKELSIHFVPGSCRLVEEEVNIPNRRVLVTGATGLLGRAVHKEFQQNNWHAVGCGFRRARPKFEQVNLLDSNAVHHIIHDFQPHVIVHCAAERRPDVVENQPDAASQLNVDASGNLAKEAAAVGAFLIYISSDYVFDGTNPPYREEDIPAPLNLYGKTKLDGEKAVLENNLGAAVLRIPILYGEVEKLEESAVTVMFDKVQFSNKSANMDHWQQRFPTHVKDVATVCRQLAEKRMLDPSIKGTFHWSGNEQMTKYEMACAIADAFNLPSSHLRPITDSPVLGAQRPRNAQLDCSKLETLGIGQRTPFRIGIKESLWPFLIDKRWRQTVFH.

NADP(+) is bound by residues 37 to 40, 60 to 62, 71 to 72, Cys93, Arg97, Tyr159, and Leu185; these read TGLL, FRR, and NL. The residue at position 309 (Thr309) is a Phosphothreonine. Residues 319–334 form a required for interaction with MAT2A region; that stretch reads LWPFLIDKRWRQTVFH.

The protein belongs to the dTDP-4-dehydrorhamnose reductase family. MAT2B subfamily. Heterotrimer; composed of a catalytic MAT2A homodimer that binds one regulatory MAT2B chain. Heterohexamer; composed of a central, catalytic MAT2A homotetramer flanked on either side by a regulatory MAT2B chain. NADP binding increases the affinity for MAT2A.

Its pathway is amino-acid biosynthesis; S-adenosyl-L-methionine biosynthesis; S-adenosyl-L-methionine from L-methionine: step 1/1. In terms of biological role, regulatory subunit of S-adenosylmethionine synthetase 2, an enzyme that catalyzes the formation of S-adenosylmethionine from methionine and ATP. Regulates MAT2A catalytic activity by changing its kinetic properties, increasing its affinity for L-methionine. Can bind NADP (in vitro). The polypeptide is Methionine adenosyltransferase 2 subunit beta (MAT2B) (Pongo abelii (Sumatran orangutan)).